Here is a 180-residue protein sequence, read N- to C-terminus: Ribulose bisphosphate carboxylase small subunit, chloroplastic (180 aa).

A chloroplast-targeting transit peptide spans 1–56 (MALISSAAVTTVNRASSAQANLVAPFTGLKSSAGFPVTKKTNNDITSIASNGGRVN).

It belongs to the RuBisCO small chain family. As to quaternary structure, heterohexadecamer of 8 large and 8 small subunits.

The protein resides in the plastid. The protein localises to the chloroplast. In terms of biological role, ruBisCO catalyzes two reactions: the carboxylation of D-ribulose 1,5-bisphosphate, the primary event in carbon dioxide fixation, as well as the oxidative fragmentation of the pentose substrate. Both reactions occur simultaneously and in competition at the same active site. Although the small subunit is not catalytic it is essential for maximal activity. This Medicago sativa (Alfalfa) protein is Ribulose bisphosphate carboxylase small subunit, chloroplastic.